The primary structure comprises 869 residues: Valine--tRNA ligase (869 aa).

The 'HIGH' region signature appears at 47 to 57 (PYPTGNFHIGN). The 'KMSKS' region motif lies at 521–525 (KMSKS). K524 is an ATP binding site.

The protein belongs to the class-I aminoacyl-tRNA synthetase family. ValS type 2 subfamily.

It is found in the cytoplasm. The catalysed reaction is tRNA(Val) + L-valine + ATP = L-valyl-tRNA(Val) + AMP + diphosphate. Its function is as follows. Catalyzes the attachment of valine to tRNA(Val). As ValRS can inadvertently accommodate and process structurally similar amino acids such as threonine, to avoid such errors, it has a 'posttransfer' editing activity that hydrolyzes mischarged Thr-tRNA(Val) in a tRNA-dependent manner. In Methanosarcina barkeri (strain Fusaro / DSM 804), this protein is Valine--tRNA ligase.